Here is a 230-residue protein sequence, read N- to C-terminus: Phosphoribosylaminoimidazole-succinocarboxamide synthase (230 aa).

It belongs to the SAICAR synthetase family.

The catalysed reaction is 5-amino-1-(5-phospho-D-ribosyl)imidazole-4-carboxylate + L-aspartate + ATP = (2S)-2-[5-amino-1-(5-phospho-beta-D-ribosyl)imidazole-4-carboxamido]succinate + ADP + phosphate + 2 H(+). The protein operates within purine metabolism; IMP biosynthesis via de novo pathway; 5-amino-1-(5-phospho-D-ribosyl)imidazole-4-carboxamide from 5-amino-1-(5-phospho-D-ribosyl)imidazole-4-carboxylate: step 1/2. The chain is Phosphoribosylaminoimidazole-succinocarboxamide synthase from Thermotoga sp. (strain RQ2).